Here is a 332-residue protein sequence, read N- to C-terminus: UPF0194 membrane protein YbhG (332 aa).

An N-terminal signal peptide occupies residues 1-16 (MMKKTVVIGLAVVVLA). A coiled-coil region spans residues 108–209 (EEIAQAAAAV…LNLQDSTLIA (102 aa)).

This sequence belongs to the UPF0194 family.

The protein localises to the periplasm. In Shigella dysenteriae serotype 1 (strain Sd197), this protein is UPF0194 membrane protein YbhG.